A 175-amino-acid polypeptide reads, in one-letter code: 19.0 kDa class II heat shock protein (175 aa).

A sHSP domain is found at 42-165; sequence DRRAMANTPM…KPRVVEVKVA (124 aa). Residues 145–175 are disordered; it reads TVDKKPPPEPKKPRVVEVKVAGAGEPKGKGK. The segment covering 146–161 has biased composition (basic and acidic residues); sequence VDKKPPPEPKKPRVVE.

Belongs to the small heat shock protein (HSP20) family. May form oligomeric structures.

The protein localises to the cytoplasm. The polypeptide is 19.0 kDa class II heat shock protein (HSP19.0) (Oryza sativa subsp. japonica (Rice)).